The primary structure comprises 224 residues: MIGKVAGILDFRGPDHVLIDVRGVGYIVYVSDRTLASMPGLGEAVALYTELVVREDLLQLFGFPTMIEKEWHRLLMTVQGVGAKAGMAILGALGAEGTARAITLGDARSIQAAPGIGPKIAQRVVLELKSKAPALMAMGGGTAALAPSEPPEPQPGTSSGSRRKTRAPEPPRPSHTADALSALANLGYQPTDAAQAVAQAAGESPDADTAALIRAALKLLAPKS.

The interval 1–64 is domain I; that stretch reads MIGKVAGILD…EDLLQLFGFP (64 aa). The tract at residues 65–143 is domain II; the sequence is TMIEKEWHRL…ALMAMGGGTA (79 aa). The segment at 141–185 is disordered; that stretch reads GTAALAPSEPPEPQPGTSSGSRRKTRAPEPPRPSHTADALSALAN. Residues 144-170 are flexible linker; that stretch reads ALAPSEPPEPQPGTSSGSRRKTRAPEP. The interval 171–224 is domain III; that stretch reads PRPSHTADALSALANLGYQPTDAAQAVAQAAGESPDADTAALIRAALKLLAPKS.

This sequence belongs to the RuvA family. As to quaternary structure, homotetramer. Forms an RuvA(8)-RuvB(12)-Holliday junction (HJ) complex. HJ DNA is sandwiched between 2 RuvA tetramers; dsDNA enters through RuvA and exits via RuvB. An RuvB hexamer assembles on each DNA strand where it exits the tetramer. Each RuvB hexamer is contacted by two RuvA subunits (via domain III) on 2 adjacent RuvB subunits; this complex drives branch migration. In the full resolvosome a probable DNA-RuvA(4)-RuvB(12)-RuvC(2) complex forms which resolves the HJ.

The protein resides in the cytoplasm. The RuvA-RuvB-RuvC complex processes Holliday junction (HJ) DNA during genetic recombination and DNA repair, while the RuvA-RuvB complex plays an important role in the rescue of blocked DNA replication forks via replication fork reversal (RFR). RuvA specifically binds to HJ cruciform DNA, conferring on it an open structure. The RuvB hexamer acts as an ATP-dependent pump, pulling dsDNA into and through the RuvAB complex. HJ branch migration allows RuvC to scan DNA until it finds its consensus sequence, where it cleaves and resolves the cruciform DNA. This chain is Holliday junction branch migration complex subunit RuvA, found in Cereibacter sphaeroides (strain KD131 / KCTC 12085) (Rhodobacter sphaeroides).